A 160-amino-acid polypeptide reads, in one-letter code: NADH-quinone oxidoreductase subunit I (160 aa).

4Fe-4S ferredoxin-type domains are found at residues 52–81 and 91–120; these read RRYS…IEAE and TRYD…EGPN. [4Fe-4S] cluster-binding residues include Cys-61, Cys-64, Cys-67, Cys-71, Cys-100, Cys-103, Cys-106, and Cys-110.

The protein belongs to the complex I 23 kDa subunit family. As to quaternary structure, NDH-1 is composed of 14 different subunits. Subunits NuoA, H, J, K, L, M, N constitute the membrane sector of the complex. [4Fe-4S] cluster serves as cofactor.

It localises to the cell membrane. The enzyme catalyses a quinone + NADH + 5 H(+)(in) = a quinol + NAD(+) + 4 H(+)(out). Its function is as follows. NDH-1 shuttles electrons from NADH, via FMN and iron-sulfur (Fe-S) centers, to quinones in the respiratory chain. The immediate electron acceptor for the enzyme in this species is believed to be ubiquinone. Couples the redox reaction to proton translocation (for every two electrons transferred, four hydrogen ions are translocated across the cytoplasmic membrane), and thus conserves the redox energy in a proton gradient. This Wolbachia sp. subsp. Brugia malayi (strain TRS) protein is NADH-quinone oxidoreductase subunit I.